The following is a 386-amino-acid chain: Probable protein phosphatase 2C 36 (386 aa).

The region spanning 60 to 363 is the PPM-type phosphatase domain; that stretch reads ELSVAVVQGN…DDITVIVLFI (304 aa). Positions 94, 95, 295, and 354 each coordinate Mn(2+).

The protein belongs to the PP2C family. Mg(2+) is required as a cofactor. Requires Mn(2+) as cofactor.

The enzyme catalyses O-phospho-L-seryl-[protein] + H2O = L-seryl-[protein] + phosphate. The catalysed reaction is O-phospho-L-threonyl-[protein] + H2O = L-threonyl-[protein] + phosphate. The protein is Probable protein phosphatase 2C 36 of Oryza sativa subsp. japonica (Rice).